Reading from the N-terminus, the 868-residue chain is Probable mixed-linked glucan synthase 3 (868 aa).

The segment at 36–68 (ERKAAGGGGGGAKGKHWAAADKGERRAAKECGG) is disordered. Positions 53 to 68 (AAADKGERRAAKECGG) are enriched in basic and acidic residues. Transmembrane regions (helical) follow at residues 86–106 (LLHPYRALIFARLIAVLLFFG) and 116–136 (IMWFWTMSVAGDVWFGFSWLL). Residue Asp-211 is part of the active site. Positions 412 and 414 each coordinate substrate. The active site involves Asp-573. Transmembrane regions (helical) follow at residues 649-669 (IYPVTSLFILLYAISPVMWLI), 686-706 (LLMIILMIHMIGWLEIKWAGI), 717-737 (FFMIGSTSAYPTAVLHMVVNL), 771-791 (MLIPTMVVLVANIGAIGVAIG), 809-829 (IMGLLFNMWVMFLLYPFALAI), and 837-857 (PIILVVLLPIIFVIVALVYVA).

This sequence belongs to the glycosyltransferase 2 family. Plant cellulose synthase-like F subfamily.

The protein localises to the golgi apparatus membrane. In terms of biological role, may catalyze both beta-1,3 and beta-1,4 glycosidic linkage on beta-D-glucan. Essential for (1,3;1,4)-beta-D-glucans synthesis in grasses and cereals (Poaceae). The mixed-linked glucans (which are not present in walls of dicotyledons or most other monocotyledonous plants) are particularly important constituents of the walls of the starchy endosperm and aleurone cells of cereal grains such as oats, wheat, rice and barley. They can account for up to 70% by weight of the wall. The protein is Probable mixed-linked glucan synthase 3 (CSLF3) of Oryza sativa subsp. indica (Rice).